The following is a 444-amino-acid chain: MATIKSIKARQIFDSRGNPTVEVDVHISNGVFARAAVPSGASTGIYEALELRDGGSDYLGKGVSKAVNNVNSIIGPALVGKDPTDQTGLDNFMVHQLDGTQNEWGWCKEKLGANAILAVSLAVCKAGAAVRNVPLYKHIADLAGNKKLVLPVPAFNVINGGSHAGNKLAMQEFMILPVGAANFKEAMKMGCEVYHHLKAVIKKKYGQDATNVGDEGGFAPNIQENKEGLELLKTAIEKAGYTGKVVIGMDVAASEFYGKDKSYDLNFKEESNDGSQKISGDQLKDLYKSFVSEYPIVSIEDPFDQDDWETYAKLTAEIGEQVQIVGDDLLVTNPKRVAKAIAEKTCNALLLKVNQIGSVTESIEAVKMSKKAGWGVMTSHRSGETEDTFIADLAVGLSTGQIKTGAPCRSERLAKYNQLLRIEEELGSEAVYAGASFRKPVEPY.

Residues His-163 and Glu-172 each coordinate substrate. Glu-215 serves as the catalytic Proton donor. Residues Asp-250, Glu-300, and Asp-327 each coordinate Mg(2+). Residues Glu-300 and Asp-327 each coordinate substrate. Lys-352 functions as the Proton acceptor in the catalytic mechanism. Residues 379–382 and Lys-403 each bind substrate; that span reads SHRS.

It belongs to the enolase family. As to quaternary structure, homodimer. Mg(2+) is required as a cofactor.

The protein resides in the cytoplasm. It carries out the reaction (2R)-2-phosphoglycerate = phosphoenolpyruvate + H2O. Its pathway is carbohydrate degradation; glycolysis; pyruvate from D-glyceraldehyde 3-phosphate: step 4/5. The sequence is that of Enolase (PGH1) from Solanum lycopersicum (Tomato).